The following is a 262-amino-acid chain: Phosphatidylserine decarboxylase proenzyme (262 aa).

Active-site charge relay system; for autoendoproteolytic cleavage activity residues include D86, H142, and S226. S226 (schiff-base intermediate with substrate; via pyruvic acid; for decarboxylase activity) is an active-site residue. Pyruvic acid (Ser); by autocatalysis is present on S226.

This sequence belongs to the phosphatidylserine decarboxylase family. PSD-B subfamily. Prokaryotic type I sub-subfamily. In terms of assembly, heterodimer of a large membrane-associated beta subunit and a small pyruvoyl-containing alpha subunit. Pyruvate is required as a cofactor. Post-translationally, is synthesized initially as an inactive proenzyme. Formation of the active enzyme involves a self-maturation process in which the active site pyruvoyl group is generated from an internal serine residue via an autocatalytic post-translational modification. Two non-identical subunits are generated from the proenzyme in this reaction, and the pyruvate is formed at the N-terminus of the alpha chain, which is derived from the carboxyl end of the proenzyme. The autoendoproteolytic cleavage occurs by a canonical serine protease mechanism, in which the side chain hydroxyl group of the serine supplies its oxygen atom to form the C-terminus of the beta chain, while the remainder of the serine residue undergoes an oxidative deamination to produce ammonia and the pyruvoyl prosthetic group on the alpha chain. During this reaction, the Ser that is part of the protease active site of the proenzyme becomes the pyruvoyl prosthetic group, which constitutes an essential element of the active site of the mature decarboxylase.

Its subcellular location is the cell membrane. The catalysed reaction is a 1,2-diacyl-sn-glycero-3-phospho-L-serine + H(+) = a 1,2-diacyl-sn-glycero-3-phosphoethanolamine + CO2. It functions in the pathway phospholipid metabolism; phosphatidylethanolamine biosynthesis; phosphatidylethanolamine from CDP-diacylglycerol: step 2/2. Catalyzes the formation of phosphatidylethanolamine (PtdEtn) from phosphatidylserine (PtdSer). This is Phosphatidylserine decarboxylase proenzyme from Bacillus thuringiensis subsp. konkukian (strain 97-27).